Reading from the N-terminus, the 175-residue chain is MSSQIRQNYSTEVEAAVNRLVNMHLRASYTYLSLGFYFDRDDVALEGVGHFFRELAEEKREGAERLLKMQNQRGGRALFLDVQKPSQDEWGKTLDAMEAALLLEKNLNQGLLDLHALGSARADPHLCDFLENHFLDEEVKLIKKMGDHLTNLRRLSGPQAELGEYLFERLTLKHD.

S2 carries the N-acetylserine modification. The Ferritin-like diiron domain occupies 7–156; it reads QNYSTEVEAA…DHLTNLRRLS (150 aa). The Fe cation site is built by E54, E57, E58, E61, and E64.

This sequence belongs to the ferritin family. Oligomer of 24 subunits. There are two types of subunits: L (light) chain and H (heavy) chain. The major chain can be light or heavy, depending on the species and tissue type. The functional molecule forms a roughly spherical shell with a diameter of 12 nm and contains a central cavity into which the insoluble mineral iron core is deposited. Interacts with NCOA4.

The protein localises to the cytoplasmic vesicle. It is found in the autophagosome. Its subcellular location is the cytoplasm. It localises to the autolysosome. Functionally, stores iron in a soluble, non-toxic, readily available form. Important for iron homeostasis. Iron is taken up in the ferrous form and deposited as ferric hydroxides after oxidation. Also plays a role in delivery of iron to cells. Mediates iron uptake in capsule cells of the developing kidney. Delivery to lysosomes by the cargo receptor NCOA4 for autophagic degradation and release or iron. This chain is Ferritin light chain (FTL), found in Felis catus (Cat).